Reading from the N-terminus, the 396-residue chain is Flavohemoprotein (396 aa).

Residues 1 to 136 (MLDAQTIATV…LANVFINREA (136 aa)) enclose the Globin domain. His85 lines the heme b pocket. Catalysis depends on charge relay system residues Tyr95 and Glu135. The segment at 147–396 (GGWEGTRDFR…YECFGPHKVL (250 aa)) is reductase. Positions 150 to 255 (EGTRDFRIVA…VAPAGDFFMA (106 aa)) constitute an FAD-binding FR-type domain. Residues Tyr188 and 204 to 207 (RQYS) each bind FAD. 268–273 (GVGQTP) provides a ligand contact to NADP(+). 389-392 (CFGP) is an FAD binding site.

Belongs to the globin family. Two-domain flavohemoproteins subfamily. It in the C-terminal section; belongs to the flavoprotein pyridine nucleotide cytochrome reductase family. In terms of assembly, monomer. FAD serves as cofactor. The cofactor is heme b.

The protein localises to the cytoplasm. It catalyses the reaction 2 nitric oxide + NADPH + 2 O2 = 2 nitrate + NADP(+) + H(+). The catalysed reaction is 2 nitric oxide + NADH + 2 O2 = 2 nitrate + NAD(+) + H(+). In terms of biological role, is involved in NO detoxification in an aerobic process, termed nitric oxide dioxygenase (NOD) reaction that utilizes O(2) and NAD(P)H to convert NO to nitrate, which protects the bacterium from various noxious nitrogen compounds. Therefore, plays a central role in the inducible response to nitrosative stress. Functionally, in the presence of oxygen and NADH, HMP has NADH oxidase activity, which leads to the generation of superoxide and H(2)O(2), both in vitro and in vivo, and it has been suggested that HMP might act as an amplifier of superoxide stress. Under anaerobic conditions, HMP also exhibits nitric oxide reductase and FAD reductase activities. However, all these reactions are much lower than NOD activity. Various electron acceptors are also reduced by HMP in vitro, including dihydropterine, ferrisiderophores, ferric citrate, cytochrome c, nitrite, S-nitrosoglutathione, and alkylhydroperoxides. However, it is unknown if these reactions are of any biological significance in vivo. The chain is Flavohemoprotein (hmp) from Escherichia coli (strain K12).